The sequence spans 435 residues: D-amino acid dehydrogenase (435 aa).

FAD is bound at residue 3-17 (VLILGSGVIGTTSAW).

Belongs to the DadA oxidoreductase family. FAD serves as cofactor.

It catalyses the reaction a D-alpha-amino acid + A + H2O = a 2-oxocarboxylate + AH2 + NH4(+). It functions in the pathway amino-acid degradation; D-alanine degradation; NH(3) and pyruvate from D-alanine: step 1/1. Its function is as follows. Oxidative deamination of D-amino acids. The protein is D-amino acid dehydrogenase of Xylella fastidiosa (strain 9a5c).